The primary structure comprises 359 residues: Bergaptol O-methyltransferase (359 aa).

Histidine 126 is a binding site for bergaptol. Residues serine 179, glycine 203, aspartate 226, aspartate 246, and lysine 260 each coordinate S-adenosyl-L-homocysteine. Residue histidine 264 participates in bergaptol binding. The active-site Proton acceptor is the histidine 264.

The protein belongs to the class I-like SAM-binding methyltransferase superfamily. Cation-independent O-methyltransferase family. COMT subfamily. As to quaternary structure, homodimer. As to expression, mostly expressed in roots and, to a lower extent, in stems and leaves.

The protein localises to the cytoplasm. The catalysed reaction is bergaptol + S-adenosyl-L-methionine = bergapten + S-adenosyl-L-homocysteine. It functions in the pathway aromatic compound metabolism. It participates in secondary metabolite biosynthesis. O-methyltransferase involved in the biosynthesis of furocoumarins natural products such as bergapten, a photosensitizer used for medical purpose such as treating psoriasis and vitiligo or facilitating resistance to microbial infection and other stresses. Catalyzes specifically the methylation of bergaptol. Not active on xanthotol, isoscopoletin, scopoletin and esculetin. The chain is Bergaptol O-methyltransferase from Kitagawia praeruptora (Peucedanum praeruptorum).